The primary structure comprises 500 residues: Probable malate:quinone oxidoreductase (500 aa).

It belongs to the MQO family. It depends on FAD as a cofactor.

The catalysed reaction is (S)-malate + a quinone = a quinol + oxaloacetate. It functions in the pathway carbohydrate metabolism; tricarboxylic acid cycle; oxaloacetate from (S)-malate (quinone route): step 1/1. The protein is Probable malate:quinone oxidoreductase of Prochlorococcus marinus (strain MIT 9211).